The primary structure comprises 249 residues: tRNA (guanine-N(1)-)-methyltransferase (249 aa).

S-adenosyl-L-methionine is bound by residues Gly113 and 133–138 (IGDFVV).

This sequence belongs to the RNA methyltransferase TrmD family. Homodimer.

Its subcellular location is the cytoplasm. The catalysed reaction is guanosine(37) in tRNA + S-adenosyl-L-methionine = N(1)-methylguanosine(37) in tRNA + S-adenosyl-L-homocysteine + H(+). Functionally, specifically methylates guanosine-37 in various tRNAs. In Neisseria gonorrhoeae (strain ATCC 700825 / FA 1090), this protein is tRNA (guanine-N(1)-)-methyltransferase.